The sequence spans 466 residues: F-box/WD repeat-containing protein 15 (466 aa).

The F-box domain maps to 1 to 45 (MAIHLPCLPMMKILSYLDAYSLLQAAQVNKDWNELASSDVLWRKL). 5 WD repeats span residues 101 to 143 (GYAC…ITWK), 146 to 185 (EQPASIKLLTTLPEMHIAVTVDIQSTIKLWDCHNREALAT), 187 to 228 (NLKS…LIST), 339 to 379 (LQCH…KTFQ), and 381 to 419 (CPEMIVKLSVDPLHVIVICNTGSMDVYAWEERSLLLRKC).

As to quaternary structure, part of an SCF (SKP1-CUL1-F-box protein) E3 ubiquitin-protein ligase complex. Interacts with KAT7 and SKP1. In terms of tissue distribution, specifically expressed in oocytes from follicles of the medullary region of the ovary.

The protein resides in the cytoplasm. It localises to the cytosol. The protein localises to the endoplasmic reticulum. Its subcellular location is the nucleus. It participates in protein modification; protein ubiquitination. In terms of biological role, substrate-recognition component of an SCF (SKP1-CUL1-F-box protein)-type E3 ubiquitin ligase complex. Promotes KAT7 ubiquitination and subsequent degradation in collaboration with MAP2K1 kinase, leading to reduced histone H3K14 acetylation and increased cell proliferation. The sequence is that of F-box/WD repeat-containing protein 15 from Mus musculus (Mouse).